We begin with the raw amino-acid sequence, 595 residues long: MVTDNSKATDNSANPNMTQHAVLRELGHKFAGKFTEQFTFDGIPTIWVSRQDLLDVLMYLRTLPKPYVMLLDLSAMDERLRQHRDGLPASDFTVFYHLMSLERNSDIRVKVALSEDDLKVPTATKIWPNANWYEREVWDMFGIVFDGHPHLTRILLPKYWEGHPLRKEYHARATEFTPYFLNNAKQQFEQENLRFVPEEWGMKRSGRDEDFMFLNLGPNHPSAHGAFRLVLQLDGEEVIDCIPDIGYHHRGAEKMAERQTWHSYIPYTDRIDYLGGVMNELPYVMAVEQLAGITVPERAQTIRVMMSEFFRITNNLLYFGTFIQDAGGMTPVFYMFTDRQKAYDVIEAVTGYRMHPAWFRIGGTAADLPRGWQRLVREFLDWMPQRLDEYVKAAMENSVLKGRTQNVAQYDAKQALAWGVTGAGLRATGVEFDLRKARPYMGYENYDFEIPVGYNGDAYDRCMVKIEEIRQSLRIIRQCMDNMPSGPYKADHPLAVPPPKNRTLNDIETLINHFISVSWGPVMPAGEASMMVEATKGINSYYITSDRSTMSYRTRIRTPTFAHLQQMPSVINGSLVSDLIIYLASIDIVMADTDR.

The segment at 1 to 186 (MVTDNSKATD…TPYFLNNAKQ (186 aa)) is NADH dehydrogenase I subunit C. The segment at 210–595 (DFMFLNLGPN…IDIVMADTDR (386 aa)) is NADH dehydrogenase I subunit D.

It in the N-terminal section; belongs to the complex I 30 kDa subunit family. In the C-terminal section; belongs to the complex I 49 kDa subunit family. In terms of assembly, NDH-1 is composed of 13 different subunits. Subunits NuoB, CD, E, F, and G constitute the peripheral sector of the complex.

The protein localises to the cell inner membrane. The catalysed reaction is a quinone + NADH + 5 H(+)(in) = a quinol + NAD(+) + 4 H(+)(out). Its function is as follows. NDH-1 shuttles electrons from NADH, via FMN and iron-sulfur (Fe-S) centers, to quinones in the respiratory chain. The immediate electron acceptor for the enzyme in this species is believed to be ubiquinone. Couples the redox reaction to proton translocation (for every two electrons transferred, four hydrogen ions are translocated across the cytoplasmic membrane), and thus conserves the redox energy in a proton gradient. The protein is NADH-quinone oxidoreductase subunit C/D of Psychrobacter sp. (strain PRwf-1).